A 135-amino-acid chain; its full sequence is Basic phospholipase A2 KBf-VA (135 aa).

Disulfide bonds link cysteine 28-cysteine 87, cysteine 42-cysteine 134, cysteine 44-cysteine 60, cysteine 59-cysteine 115, cysteine 66-cysteine 108, cysteine 76-cysteine 101, and cysteine 94-cysteine 106. Residues tyrosine 43, glycine 45, and glycine 47 each coordinate Ca(2+). Histidine 63 is an active-site residue. Ca(2+) is bound at residue aspartate 64. The active site involves aspartate 109.

It belongs to the phospholipase A2 family. Group I subfamily. D49 sub-subfamily. Requires Ca(2+) as cofactor. Expressed by the venom gland.

Its subcellular location is the secreted. The catalysed reaction is a 1,2-diacyl-sn-glycero-3-phosphocholine + H2O = a 1-acyl-sn-glycero-3-phosphocholine + a fatty acid + H(+). Snake venom phospholipase A2 (PLA2) that inhibits neuromuscular transmission by blocking acetylcholine release from the nerve termini. PLA2 catalyzes the calcium-dependent hydrolysis of the 2-acyl groups in 3-sn-phosphoglycerides. This Bungarus fasciatus (Banded krait) protein is Basic phospholipase A2 KBf-VA.